A 345-amino-acid polypeptide reads, in one-letter code: MVSFASTLPSLVSFIPSPSSITNASRNPPQPGMICCKFRSELNNEDRFHRRDILQSVGAAVGMDLIARSSAFIEVANAADLIQRRQRSDFQSKIKLTLYDAIKANPDIIPSLLTLALNDAITYDKATKTGGPNGSIRFSSEISRPENKGLDAALNLLEESKKVIDLDSKGGPISYADLIQFAAQSAVKSTFIASAISKCGGNVEKGTLLYSAYGSNGQWGQFDRIFGRSDAQEPDPEGRVPQWDKASVQEMKDKFKAVGLGPRQLAVMSSFLGPDQAATEALLASDPEVLPWIQKYQRSRETVSRTDYEVDLITTVTKLSSLGQVINYEAYTYPPRKIDVTKLKL.

Belongs to the peroxidase family.

The protein localises to the plastid. Its subcellular location is the chloroplast thylakoid lumen. The chain is Thylakoid lumenal 29 kDa protein, chloroplastic (CLEB3J9) from Solanum lycopersicum (Tomato).